Here is a 608-residue protein sequence, read N- to C-terminus: Pentatricopeptide repeat-containing protein 1, apicoplast (608 aa).

PPR repeat units follow at residues T165 to P199, D200 to S230, N236 to E270, Q336 to M370, S372 to D402, N410 to P445, and N446 to N480.

It belongs to the PPR family. P subfamily. Homodimer.

It localises to the plastid. The protein resides in the apicoplast. Binds to apicoplast RNA transcripts, preferentially to the motif UUAU, and protects RNA transcripts from degradation by ribonuclease. The chain is Pentatricopeptide repeat-containing protein 1, apicoplast from Plasmodium falciparum (isolate 3D7).